Here is a 348-residue protein sequence, read N- to C-terminus: Phage-like element PBSX protein XkdT (348 aa).

This sequence belongs to the Mu gp47/PBSX XkdT family.

The protein is Phage-like element PBSX protein XkdT (xkdT) of Bacillus subtilis (strain 168).